Reading from the N-terminus, the 572-residue chain is Sulfite reductase [NADPH] hemoprotein beta-component (572 aa).

[4Fe-4S] cluster contacts are provided by C436, C442, C481, and C485. C485 contributes to the siroheme binding site.

This sequence belongs to the nitrite and sulfite reductase 4Fe-4S domain family. Alpha(8)-beta(8). The alpha component is a flavoprotein, the beta component is a hemoprotein. The cofactor is siroheme. Requires [4Fe-4S] cluster as cofactor.

It carries out the reaction hydrogen sulfide + 3 NADP(+) + 3 H2O = sulfite + 3 NADPH + 4 H(+). The protein operates within sulfur metabolism; hydrogen sulfide biosynthesis; hydrogen sulfide from sulfite (NADPH route): step 1/1. Functionally, component of the sulfite reductase complex that catalyzes the 6-electron reduction of sulfite to sulfide. This is one of several activities required for the biosynthesis of L-cysteine from sulfate. The sequence is that of Sulfite reductase [NADPH] hemoprotein beta-component from Bacillus pumilus (strain SAFR-032).